The primary structure comprises 315 residues: tRNA uridine(34) hydroxylase (315 aa).

A Rhodanese domain is found at 136 to 230; that stretch reads SDPETLVIDT…YLEEIPPEES (95 aa). The active-site Cysteine persulfide intermediate is Cys190.

This sequence belongs to the TrhO family.

The catalysed reaction is uridine(34) in tRNA + AH2 + O2 = 5-hydroxyuridine(34) in tRNA + A + H2O. Catalyzes oxygen-dependent 5-hydroxyuridine (ho5U) modification at position 34 in tRNAs. The chain is tRNA uridine(34) hydroxylase from Sinorhizobium medicae (strain WSM419) (Ensifer medicae).